The following is a 509-amino-acid chain: MSKKPVVLMILDGFGLTNKVDGNAVSAANKPNLDNILKKYPHTQLGASGMDVGLPEGQMGNSEVGHLNIGAGRIVYQALTKITKSISDGDFFENVALNKAIENAKKNNSTLHLLGLLSPGGVHSHIDHLKGLIKLAKEKDIKKVYIHAFLDGRDVAPSSAKEYIEDIEIYMQEIGVGEIATISGRYYAMDRDKRWERVQLCYNAIVLGKGEEANSAVEGLEKSYRDNKTDEFVLPSVVLKEGKPKAKIENKDSVVFFNFRPDRARELTRAINDKVFDGFERETLDLTYVTMTEYDSTLENVEVAFPPEHLNNTLGEYVSKNGKKQLRIAETEKYAHVTFFFNGGVEEPNEGEDRVLIPSPKVATYDMQPEMNAYEVTDKLLERLDEDKYDMVILNFANPDMVGHTGVFEAAKKAIETVDECVGKIVNKVLEKDGTAFITADHGNSEEMIDYSTGKPMTAHTTNPVPFMYVSNDSKELREGGKLADIAPTMLQLMNLPKPSEMTGNSLIK.

Residues Asp-12 and Ser-62 each contribute to the Mn(2+) site. Ser-62 serves as the catalytic Phosphoserine intermediate. Substrate is bound by residues His-123, 153 to 154 (RD), Arg-185, Arg-191, 260 to 263 (RPDR), and Lys-333. Mn(2+) contacts are provided by Asp-400, His-404, Asp-441, His-442, and His-460.

The protein belongs to the BPG-independent phosphoglycerate mutase family. In terms of assembly, monomer. The cofactor is Mn(2+).

The catalysed reaction is (2R)-2-phosphoglycerate = (2R)-3-phosphoglycerate. The protein operates within carbohydrate degradation; glycolysis; pyruvate from D-glyceraldehyde 3-phosphate: step 3/5. Functionally, catalyzes the interconversion of 2-phosphoglycerate and 3-phosphoglycerate. The polypeptide is 2,3-bisphosphoglycerate-independent phosphoglycerate mutase (Clostridium botulinum (strain Langeland / NCTC 10281 / Type F)).